Here is a 1305-residue protein sequence, read N- to C-terminus: Cyclin-G-associated kinase (1305 aa).

Ser-2 is subject to N-acetylserine. Phosphoserine is present on residues Ser-2 and Ser-16. The Protein kinase domain maps to 40–315 (LRVRRVLAEG…IAEVVRQLQE (276 aa)). The Proton acceptor role is filled by Asp-173. Residues 332-354 (LEQNGGYGNSGPSRAQPPSGGPV) are disordered. One can recognise a Phosphatase tensin-type domain in the interval 397–564 (SVANYAKGDL…EYVCDMVAEE (168 aa)). A Phosphoserine modification is found at Ser-454. The C2 tensin-type domain maps to 570–708 (SKPMLVKSVV…FQVNLEVEVE (139 aa)). The tract at residues 747-856 (FGKPELPRQP…TPRLAAGTRQ (110 aa)) is disordered. The residue at position 768 (Ser-768) is a Phosphoserine. Thr-774 is modified (phosphothreonine). Residues 776 to 789 (SDSPQSSSTDTNHF) are compositionally biased toward polar residues. Ser-781 is modified (phosphoserine). Thr-792 carries the post-translational modification Phosphothreonine. Over residues 805–817 (VDNTSPKESQSNL) the composition is skewed to polar residues. A phosphoserine mark is found at Ser-809, Ser-824, and Ser-827. Acidic residues predominate over residues 822 to 832 (DGSEVSDEEEA). A compositionally biased stretch (basic and acidic residues) spans 836–848 (SEERKPGAGEDTP). Ser-938 is subject to Phosphoserine. The tract at residues 1044–1141 (LPGPASMPVP…PQAKPAPRAS (98 aa)) is disordered. The segment covering 1105–1131 (VGTSATTHKSNSSWQTTRPTAPGTSWP) has biased composition (polar residues). Arg-1122 is subject to Omega-N-methylarginine. A Phosphoserine modification is found at Ser-1171. The region spanning 1241-1305 (SRWTPVSMAD…FENQGSRPLF (65 aa)) is the J domain.

This sequence belongs to the protein kinase superfamily. Ser/Thr protein kinase family.

The protein resides in the cytoplasm. It localises to the perinuclear region. It is found in the golgi apparatus. The protein localises to the trans-Golgi network. Its subcellular location is the cell junction. The protein resides in the focal adhesion. It localises to the cytoplasmic vesicle. It is found in the clathrin-coated vesicle. It carries out the reaction L-seryl-[protein] + ATP = O-phospho-L-seryl-[protein] + ADP + H(+). It catalyses the reaction L-threonyl-[protein] + ATP = O-phospho-L-threonyl-[protein] + ADP + H(+). Its function is as follows. Associates with cyclin G and CDK5. Seems to act as an auxilin homolog that is involved in the uncoating of clathrin-coated vesicles by Hsc70 in non-neuronal cells. Expression oscillates slightly during the cell cycle, peaking at G1. May play a role in clathrin-mediated endocytosis and intracellular trafficking, and in the dynamics of clathrin assembly/disassembly. The chain is Cyclin-G-associated kinase from Rattus norvegicus (Rat).